The following is a 490-amino-acid chain: tRNA-guanine(15) transglycosylase (490 aa).

Residue aspartate 90 is the Nucleophile of the active site. Positions 125 and 193 each coordinate substrate. The Zn(2+) site is built by cysteine 276, cysteine 278, and cysteine 281.

Belongs to the archaeosine tRNA-ribosyltransferase family. Zn(2+) is required as a cofactor.

It carries out the reaction guanosine(15) in tRNA + 7-cyano-7-deazaguanine = 7-cyano-7-carbaguanosine(15) in tRNA + guanine. The protein operates within tRNA modification; archaeosine-tRNA biosynthesis. Its function is as follows. Exchanges the guanine residue with 7-cyano-7-deazaguanine (preQ0) at position 15 in the dihydrouridine loop (D-loop) of archaeal tRNAs. The protein is tRNA-guanine(15) transglycosylase of Methanosarcina acetivorans (strain ATCC 35395 / DSM 2834 / JCM 12185 / C2A).